We begin with the raw amino-acid sequence, 176 residues long: MDFKQYSPEELKECSMIEVVHSVLGDKRQATTFNELVQEIAQVLGLSQEQVNAKIAQFYTDLNIDGRFINLGENRWGLRSWYPYEQIDEEILPQPKPKKKRKVEDDGFDDYIEEDEDFDDADVTEDEDDDVEDLDKVLEDEDGDDDDLDDLDEDEDDFAEEELEYDETEEEEEEEL.

Residues 14-81 (CSMIEVVHSV…GENRWGLRSW (68 aa)) enclose the HTH HARE-type domain. The disordered stretch occupies residues 91-176 (ILPQPKPKKK…ETEEEEEEEL (86 aa)). Acidic residues predominate over residues 106-176 (DGFDDYIEED…ETEEEEEEEL (71 aa)).

It belongs to the RpoE family. RNAP is composed of a core of 2 alpha, a beta and a beta' subunits. The core is associated with a delta subunit and one of several sigma factors.

Functionally, participates in both the initiation and recycling phases of transcription. In the presence of the delta subunit, RNAP displays an increased specificity of transcription, a decreased affinity for nucleic acids, and an increased efficiency of RNA synthesis because of enhanced recycling. The sequence is that of Probable DNA-directed RNA polymerase subunit delta from Bacillus thuringiensis (strain Al Hakam).